A 109-amino-acid polypeptide reads, in one-letter code: uncharacterized protein (109 aa).

3 consecutive transmembrane segments (helical) span residues 16 to 36 (HPHL…EIYF), 52 to 72 (LIVL…LIAL), and 87 to 107 (ILLC…AYPV).

The protein localises to the cell membrane. This is an uncharacterized protein from Salmonella typhimurium (strain LT2 / SGSC1412 / ATCC 700720).